A 119-amino-acid chain; its full sequence is Large ribosomal subunit protein bL20 (119 aa).

It belongs to the bacterial ribosomal protein bL20 family.

Binds directly to 23S ribosomal RNA and is necessary for the in vitro assembly process of the 50S ribosomal subunit. It is not involved in the protein synthesizing functions of that subunit. This Legionella pneumophila (strain Paris) protein is Large ribosomal subunit protein bL20.